The following is a 154-amino-acid chain: UPF0178 protein BAV3236 (154 aa).

The protein belongs to the UPF0178 family.

In Bordetella avium (strain 197N), this protein is UPF0178 protein BAV3236.